A 274-amino-acid polypeptide reads, in one-letter code: Bis(5'-nucleosyl)-tetraphosphatase, symmetrical (274 aa).

This sequence belongs to the Ap4A hydrolase family.

The catalysed reaction is P(1),P(4)-bis(5'-adenosyl) tetraphosphate + H2O = 2 ADP + 2 H(+). Its function is as follows. Hydrolyzes diadenosine 5',5'''-P1,P4-tetraphosphate to yield ADP. In Buchnera aphidicola subsp. Acyrthosiphon pisum (strain 5A), this protein is Bis(5'-nucleosyl)-tetraphosphatase, symmetrical.